The following is a 1374-amino-acid chain: DNA-directed RNA polymerase subunit beta (1374 aa).

Belongs to the RNA polymerase beta chain family. The RNAP catalytic core consists of 2 alpha, 1 beta, 1 beta' and 1 omega subunit. When a sigma factor is associated with the core the holoenzyme is formed, which can initiate transcription.

The catalysed reaction is RNA(n) + a ribonucleoside 5'-triphosphate = RNA(n+1) + diphosphate. In terms of biological role, DNA-dependent RNA polymerase catalyzes the transcription of DNA into RNA using the four ribonucleoside triphosphates as substrates. This chain is DNA-directed RNA polymerase subunit beta, found in Rhodopseudomonas palustris (strain TIE-1).